The sequence spans 62 residues: Toxin Tb2 (62 aa).

In terms of domain architecture, LCN-type CS-alpha/beta spans 1 to 62; that stretch reads KEGYAMDHEG…KVWDYATNKC (62 aa). 4 disulfides stabilise this stretch: Cys11/Cys62, Cys15/Cys38, Cys23/Cys43, and Cys27/Cys45. Cys62 carries the post-translational modification Cysteine amide.

Belongs to the long (4 C-C) scorpion toxin superfamily. Sodium channel inhibitor family. Beta subfamily. Expressed by the venom gland.

The protein resides in the secreted. Beta toxins bind voltage-independently at site-4 of sodium channels (Nav) and shift the voltage of activation toward more negative potentials thereby affecting sodium channel activation and promoting spontaneous and repetitive firing. This toxin is active on mammals. In Tityus bahiensis (Brazilian scorpion), this protein is Toxin Tb2.